The primary structure comprises 156 residues: 6,7-dimethyl-8-ribityllumazine synthase (156 aa).

5-amino-6-(D-ribitylamino)uracil-binding positions include phenylalanine 22, 57–59 (AYE), and 81–83 (TVI). 86 to 87 (GT) is a (2S)-2-hydroxy-3-oxobutyl phosphate binding site. The active-site Proton donor is the histidine 89. Phenylalanine 114 contacts 5-amino-6-(D-ribitylamino)uracil. A (2S)-2-hydroxy-3-oxobutyl phosphate-binding site is contributed by arginine 128.

It belongs to the DMRL synthase family. Forms an icosahedral capsid composed of 60 subunits, arranged as a dodecamer of pentamers.

The enzyme catalyses (2S)-2-hydroxy-3-oxobutyl phosphate + 5-amino-6-(D-ribitylamino)uracil = 6,7-dimethyl-8-(1-D-ribityl)lumazine + phosphate + 2 H2O + H(+). It participates in cofactor biosynthesis; riboflavin biosynthesis; riboflavin from 2-hydroxy-3-oxobutyl phosphate and 5-amino-6-(D-ribitylamino)uracil: step 1/2. In terms of biological role, catalyzes the formation of 6,7-dimethyl-8-ribityllumazine by condensation of 5-amino-6-(D-ribitylamino)uracil with 3,4-dihydroxy-2-butanone 4-phosphate. This is the penultimate step in the biosynthesis of riboflavin. The protein is 6,7-dimethyl-8-ribityllumazine synthase of Yersinia enterocolitica serotype O:8 / biotype 1B (strain NCTC 13174 / 8081).